We begin with the raw amino-acid sequence, 334 residues long: Succinate receptor 1 (334 aa).

Residues 5–31 lie on the Extracellular side of the membrane; sequence MAWNATCKNWLAAEAALEKYYLSIFYG. A glycan (N-linked (GlcNAc...) asparagine) is linked at N8. Residues 32-52 traverse the membrane as a helical segment; sequence IEFVVGVLGNTIVVYGYIFSL. Residues 53–59 are Cytoplasmic-facing; it reads KNWNSSN. A helical transmembrane segment spans residues 60-80; the sequence is IYLFNLSVSDLAFLCTLPMLI. Topologically, residues 81 to 103 are extracellular; the sequence is RSYANGNWIYGDVLCISNRYVLH. A disulfide bond links C95 and C172. Residues 104 to 124 form a helical membrane-spanning segment; that stretch reads ANLYTSILFLTFISIDRYLII. Over 125 to 137 the chain is Cytoplasmic; it reads KYPFREHLLQKKE. Residues 138-158 form a helical membrane-spanning segment; that stretch reads FAILISLAIWVLVTLELLPIL. Residues 159–185 are Extracellular-facing; the sequence is PLINPVITDNGTTCNDFASSGDPNYNL. A glycan (N-linked (GlcNAc...) asparagine) is linked at N168. Residues 186–206 form a helical membrane-spanning segment; that stretch reads IYSMCLTLLGFLIPLFVMCFF. Over 207 to 230 the chain is Cytoplasmic; the sequence is YYKIALFLKQRNRQVATALPLEKP. Residues 231–251 form a helical membrane-spanning segment; that stretch reads LNLVIMAVVIFSVLFTPYHVM. The Extracellular portion of the chain corresponds to 252 to 281; sequence RNVRIASRLGSWKQYQCTQVVINSFYIVTR. Residues 282–302 form a helical membrane-spanning segment; the sequence is PLAFLNSVINPVFYFLLGDHF. At 303 to 334 the chain is on the cytoplasmic side; it reads RDMLMNQLRHNFKSLTSFSRWAHELLLSFREK.

This sequence belongs to the G-protein coupled receptor 1 family. As to expression, expressed specifically in kidney. Highly expressed in immature dendritic cells, expression rapidly downregulates after maturation. Also expressed in macrophages.

Its subcellular location is the cell membrane. Functionally, g protein-coupled receptor for succinate able to mediate signaling through Gq/GNAQ or Gi/GNAI second messengers depending on the cell type and the processes regulated. Succinate-SUCNR1 signaling serves as a link between metabolic stress, inflammation and energy homeostasis. In macrophages, plays a range of immune-regulatory roles. During inflammation, succinate-SUCNR1 signaling may act as an anti-inflammatory mediator or boost inflammation depending on the inflammatory status of cells. Hyperpolarizes M2 macrophages versus M1 phenotype through Gq signaling by regulating the transcription of genes involved in immune function. In activated M1 macrophages, plays a pro-inflammatory role in response to LPS. Expressed in dendritic cells, where it is involved in the sensing of immunological danger and enhances immunity. Mediates succinate triggered intracelleular calcium mobilization, induces migratory responses and acts in synergy with Toll-like receptor ligands for the production of proinflammatory cytokines as well as an enhancement of antigen-specific activation of helper T cells. In the small intestine, mediates the activation of tuft cells by dietary succinate and triggers type 2 immunity. In adipocytes, plays an important role in the control of energy metabolism. In response to succinate, controls leptin expression in an AMPK-JNK-CEBPA-dependent as well as circadian clock-regulated manner. In muscle tissue, is expressed in non-muscle cells and coordinates muscle remodeling in response to the succinate produced during exercise training in a paracrine manner. In retina, acts as a mediator of vessel growth during retinal development. In response to succinate, regulates the production of angiogenic factors, including VEGF, by retinal ganglion neurons. This chain is Succinate receptor 1, found in Homo sapiens (Human).